The sequence spans 233 residues: Biosynthetic peptidoglycan transglycosylase (233 aa).

A helical membrane pass occupies residues 8–28 (LIALPVGIFIFFNAYVYGNII).

It belongs to the glycosyltransferase 51 family.

The protein resides in the cell inner membrane. It carries out the reaction [GlcNAc-(1-&gt;4)-Mur2Ac(oyl-L-Ala-gamma-D-Glu-L-Lys-D-Ala-D-Ala)](n)-di-trans,octa-cis-undecaprenyl diphosphate + beta-D-GlcNAc-(1-&gt;4)-Mur2Ac(oyl-L-Ala-gamma-D-Glu-L-Lys-D-Ala-D-Ala)-di-trans,octa-cis-undecaprenyl diphosphate = [GlcNAc-(1-&gt;4)-Mur2Ac(oyl-L-Ala-gamma-D-Glu-L-Lys-D-Ala-D-Ala)](n+1)-di-trans,octa-cis-undecaprenyl diphosphate + di-trans,octa-cis-undecaprenyl diphosphate + H(+). The protein operates within cell wall biogenesis; peptidoglycan biosynthesis. Its function is as follows. Peptidoglycan polymerase that catalyzes glycan chain elongation from lipid-linked precursors. The chain is Biosynthetic peptidoglycan transglycosylase from Neisseria meningitidis serogroup B (strain ATCC BAA-335 / MC58).